The chain runs to 144 residues: Large ribosomal subunit protein uL15 (144 aa).

The interval 1–53 (MRLNTLSPAEGSKHASKRLGRGIGSGLGKTGGRGHKGQKSRSGGGVRRGFEGG) is disordered. Residues 21–31 (RGIGSGLGKTG) are compositionally biased toward gly residues.

It belongs to the universal ribosomal protein uL15 family. Part of the 50S ribosomal subunit.

Binds to the 23S rRNA. This chain is Large ribosomal subunit protein uL15, found in Edwardsiella ictaluri (strain 93-146).